The sequence spans 608 residues: Cilia- and flagella-associated protein 100 (608 aa).

A compositionally biased stretch (polar residues) spans 1–17; sequence MSETLSNIVSKNMTNDK. Positions 1-57 are disordered; it reads MSETLSNIVSKNMTNDKNSLESMNISSSSSAEENPKKQAKKXKERGPDPSANPFHLS. A compositionally biased stretch (low complexity) spans 20–32; it reads LESMNISSSSSAE. Coiled coils occupy residues 164-196 and 230-257; these read TLDC…LAKD and LEIR…QHYK. Disordered regions lie at residues 291–320 and 339–377; these read ASKD…AKEG and LSSP…GEEP. Low complexity predominate over residues 339–361; that stretch reads LSSPQQGSQPSESSGGNSRGSNS. Coiled coils occupy residues 385 to 435 and 500 to 575; these read QQLL…QLKQ and TVQM…RGRT.

This sequence belongs to the CFAP100 family.

Its subcellular location is the cytoplasm. The protein localises to the cytoskeleton. It is found in the cilium axoneme. May play a role in ciliary/flagellar motility by regulating the assembly and the activity of axonemal inner dynein arm. The protein is Cilia- and flagella-associated protein 100 of Macaca fascicularis (Crab-eating macaque).